A 467-amino-acid polypeptide reads, in one-letter code: Flagellum-specific ATP synthase (467 aa).

180–187 (AGSGVGKS) is an ATP binding site.

It belongs to the ATPase alpha/beta chains family.

It is found in the cytoplasm. It carries out the reaction ATP + H2O + 4 H(+)(in) = ADP + phosphate + 5 H(+)(out). Probable catalytic subunit of a protein translocase for flagellum-specific export, or a proton translocase involved in local circuits at the flagellum. This chain is Flagellum-specific ATP synthase (fliI), found in Rhizobium meliloti (strain 1021) (Ensifer meliloti).